A 426-amino-acid chain; its full sequence is Cytochrome c biogenesis protein CcsB (426 aa).

The next 3 membrane-spanning stretches (helical) occupy residues 11–31 (LRVA…GTAI), 69–89 (SVWF…CSWR), and 159–179 (VGPL…VWGV).

This sequence belongs to the Ccs1/CcsB family. As to quaternary structure, may interact with CcsA.

It is found in the cellular thylakoid membrane. Functionally, required during biogenesis of c-type cytochromes (cytochrome c6 and cytochrome f) at the step of heme attachment. This is Cytochrome c biogenesis protein CcsB from Synechococcus sp. (strain CC9902).